A 203-amino-acid chain; its full sequence is Small ribosomal subunit protein uS5 (203 aa).

The segment covering 1 to 25 (MPGRTRRDGGSESGGKDRRDRRDGG) has biased composition (basic and acidic residues). The disordered stretch occupies residues 1-36 (MPGRTRRDGGSESGGKDRRDRRDGGRGGAAQEKTPQ). An S5 DRBM domain is found at 36–99 (QFERVVTINR…EEAKKNFFRV (64 aa)).

This sequence belongs to the universal ribosomal protein uS5 family. As to quaternary structure, part of the 30S ribosomal subunit. Contacts proteins S4 and S8.

Functionally, with S4 and S12 plays an important role in translational accuracy. Located at the back of the 30S subunit body where it stabilizes the conformation of the head with respect to the body. The polypeptide is Small ribosomal subunit protein uS5 (Saccharopolyspora erythraea (strain ATCC 11635 / DSM 40517 / JCM 4748 / NBRC 13426 / NCIMB 8594 / NRRL 2338)).